The primary structure comprises 313 residues: Porphobilinogen deaminase (313 aa).

C242 is subject to S-(dipyrrolylmethanemethyl)cysteine.

It belongs to the HMBS family. Monomer. Dipyrromethane is required as a cofactor.

It catalyses the reaction 4 porphobilinogen + H2O = hydroxymethylbilane + 4 NH4(+). It participates in porphyrin-containing compound metabolism; protoporphyrin-IX biosynthesis; coproporphyrinogen-III from 5-aminolevulinate: step 2/4. In terms of biological role, tetrapolymerization of the monopyrrole PBG into the hydroxymethylbilane pre-uroporphyrinogen in several discrete steps. In Klebsiella pneumoniae (strain 342), this protein is Porphobilinogen deaminase.